Reading from the N-terminus, the 294-residue chain is Nucleotide-binding protein Dtur_1129 (294 aa).

Residue 10-17 (GLSGAGKS) coordinates ATP. Position 61–64 (61–64 (DIRT)) interacts with GTP.

Belongs to the RapZ-like family.

In terms of biological role, displays ATPase and GTPase activities. The protein is Nucleotide-binding protein Dtur_1129 of Dictyoglomus turgidum (strain DSM 6724 / Z-1310).